A 464-amino-acid chain; its full sequence is FERM domain-containing protein 8 (464 aa).

Position 1 is an N-acetylmethionine (Met1). The interval 1–22 (MDGTEGSAGQPGPAERSHRSSV) is disordered. Ser24 carries the post-translational modification Phosphoserine. An FERM domain is found at 30–376 (ADVLVYLADD…YCIELSQAAE (347 aa)). Residues 376–408 (EPAGPQDSATGSPSDPSSSLAPVQRPKLRRQGS) form a disordered region. Phosphoserine occurs at positions 383, 387, and 408. At Thr419 the chain carries Phosphothreonine. Residues Ser439 and Ser446 each carry the phosphoserine modification.

As to quaternary structure, interacts with iRhom1/RHBDF1 and iRhom2/RHBDF2 (via cytoplasmic N-termini); this interaction leads to mutual protein stabilization. Interacts with ADAM17; this interaction is indirect and mediated by iRhom proteins. Interacts with LRP6; this interaction affects LRP6-binding to AXIN1. In terms of tissue distribution, widely expressed, with high expression in heart and spleen.

The protein localises to the cytoplasm. The protein resides in the cytosol. It localises to the cell membrane. Functionally, promotes the cell surface stability of iRhom1/RHBDF1 and iRhom2/RHBDF2 and prevents their degradation via the endolysosomal pathway. By acting on iRhoms, involved in ADAM17-mediated shedding of TNF, amphiregulin/AREG, HBEGF and TGFA from the cell surface. Negatively regulates Wnt signaling, possibly by antagonizing the recruitment of AXIN1 to LRP6. This is FERM domain-containing protein 8 (FRMD8) from Homo sapiens (Human).